Here is a 143-residue protein sequence, read N- to C-terminus: Nucleoside diphosphate kinase (143 aa).

The ATP site is built by K11, F59, R87, T93, R104, and N114. The Pros-phosphohistidine intermediate role is filled by H117.

This sequence belongs to the NDK family. As to quaternary structure, homotetramer. The cofactor is Mg(2+).

The protein resides in the cytoplasm. It carries out the reaction a 2'-deoxyribonucleoside 5'-diphosphate + ATP = a 2'-deoxyribonucleoside 5'-triphosphate + ADP. The catalysed reaction is a ribonucleoside 5'-diphosphate + ATP = a ribonucleoside 5'-triphosphate + ADP. Its function is as follows. Major role in the synthesis of nucleoside triphosphates other than ATP. The ATP gamma phosphate is transferred to the NDP beta phosphate via a ping-pong mechanism, using a phosphorylated active-site intermediate. The polypeptide is Nucleoside diphosphate kinase (Shewanella denitrificans (strain OS217 / ATCC BAA-1090 / DSM 15013)).